The sequence spans 273 residues: Imidazole glycerol phosphate synthase subunit HisF (273 aa).

Active-site residues include aspartate 11 and aspartate 134.

This sequence belongs to the HisA/HisF family. Heterodimer of HisH and HisF.

It is found in the cytoplasm. The enzyme catalyses 5-[(5-phospho-1-deoxy-D-ribulos-1-ylimino)methylamino]-1-(5-phospho-beta-D-ribosyl)imidazole-4-carboxamide + L-glutamine = D-erythro-1-(imidazol-4-yl)glycerol 3-phosphate + 5-amino-1-(5-phospho-beta-D-ribosyl)imidazole-4-carboxamide + L-glutamate + H(+). Its pathway is amino-acid biosynthesis; L-histidine biosynthesis; L-histidine from 5-phospho-alpha-D-ribose 1-diphosphate: step 5/9. IGPS catalyzes the conversion of PRFAR and glutamine to IGP, AICAR and glutamate. The HisF subunit catalyzes the cyclization activity that produces IGP and AICAR from PRFAR using the ammonia provided by the HisH subunit. This chain is Imidazole glycerol phosphate synthase subunit HisF, found in Methanococcoides burtonii (strain DSM 6242 / NBRC 107633 / OCM 468 / ACE-M).